Consider the following 199-residue polypeptide: UPF0301 protein Daci_1578 (199 aa).

It belongs to the UPF0301 (AlgH) family.

The protein is UPF0301 protein Daci_1578 of Delftia acidovorans (strain DSM 14801 / SPH-1).